An 859-amino-acid chain; its full sequence is Leucine--tRNA ligase (859 aa).

A 'HIGH' region motif is present at residues 42 to 52 (PYPSGRLHMGH). The 'KMSKS' region signature appears at 618–622 (KMSKS). Lysine 621 is a binding site for ATP.

This sequence belongs to the class-I aminoacyl-tRNA synthetase family.

The protein localises to the cytoplasm. The enzyme catalyses tRNA(Leu) + L-leucine + ATP = L-leucyl-tRNA(Leu) + AMP + diphosphate. This chain is Leucine--tRNA ligase, found in Shewanella baltica (strain OS223).